Here is a 371-residue protein sequence, read N- to C-terminus: Carbamoyl phosphate synthase small chain (371 aa).

A CPSase region spans residues 1–190; it reads MRKTAILALE…LYRENEKPLV (190 aa). 3 residues coordinate L-glutamine: serine 47, glycine 237, and glycine 239. A Glutamine amidotransferase type-1 domain is found at 189 to 371; it reads LVAVIDFGVK…FKEFVKMAQG (183 aa). The active-site Nucleophile is the cysteine 264. Positions 265, 268, 306, and 309 each coordinate L-glutamine. Active-site residues include histidine 348 and glutamate 350.

This sequence belongs to the CarA family. In terms of assembly, composed of two chains; the small (or glutamine) chain promotes the hydrolysis of glutamine to ammonia, which is used by the large (or ammonia) chain to synthesize carbamoyl phosphate. Tetramer of heterodimers (alpha,beta)4.

It carries out the reaction hydrogencarbonate + L-glutamine + 2 ATP + H2O = carbamoyl phosphate + L-glutamate + 2 ADP + phosphate + 2 H(+). The catalysed reaction is L-glutamine + H2O = L-glutamate + NH4(+). It functions in the pathway amino-acid biosynthesis; L-arginine biosynthesis; carbamoyl phosphate from bicarbonate: step 1/1. It participates in pyrimidine metabolism; UMP biosynthesis via de novo pathway; (S)-dihydroorotate from bicarbonate: step 1/3. Its function is as follows. Small subunit of the glutamine-dependent carbamoyl phosphate synthetase (CPSase). CPSase catalyzes the formation of carbamoyl phosphate from the ammonia moiety of glutamine, carbonate, and phosphate donated by ATP, constituting the first step of 2 biosynthetic pathways, one leading to arginine and/or urea and the other to pyrimidine nucleotides. The small subunit (glutamine amidotransferase) binds and cleaves glutamine to supply the large subunit with the substrate ammonia. In Aquifex aeolicus (strain VF5), this protein is Carbamoyl phosphate synthase small chain.